A 351-amino-acid chain; its full sequence is Phosphate acyltransferase (351 aa).

The protein belongs to the PlsX family. Homodimer. Probably interacts with PlsY.

The protein localises to the cytoplasm. The enzyme catalyses a fatty acyl-[ACP] + phosphate = an acyl phosphate + holo-[ACP]. It participates in lipid metabolism; phospholipid metabolism. Catalyzes the reversible formation of acyl-phosphate (acyl-PO(4)) from acyl-[acyl-carrier-protein] (acyl-ACP). This enzyme utilizes acyl-ACP as fatty acyl donor, but not acyl-CoA. This chain is Phosphate acyltransferase, found in Gloeothece citriformis (strain PCC 7424) (Cyanothece sp. (strain PCC 7424)).